A 121-amino-acid polypeptide reads, in one-letter code: Small ribosomal subunit protein uS13 (121 aa).

The segment at 94-121 (GLPLRGQRTRTNARTRKGPRRAAQALKK) is disordered.

The protein belongs to the universal ribosomal protein uS13 family. As to quaternary structure, part of the 30S ribosomal subunit. Forms a loose heterodimer with protein S19. Forms two bridges to the 50S subunit in the 70S ribosome.

Located at the top of the head of the 30S subunit, it contacts several helices of the 16S rRNA. In the 70S ribosome it contacts the 23S rRNA (bridge B1a) and protein L5 of the 50S subunit (bridge B1b), connecting the 2 subunits; these bridges are implicated in subunit movement. Contacts the tRNAs in the A and P-sites. The polypeptide is Small ribosomal subunit protein uS13 (Burkholderia mallei (strain NCTC 10247)).